Consider the following 141-residue polypeptide: Auxin-responsive protein SAUR61 (141 aa).

The protein belongs to the ARG7 family.

The protein resides in the cell membrane. Functionally, may promote auxin-stimulated organ elongation, such as hypocotyls, stamen filaments and petals. This chain is Auxin-responsive protein SAUR61, found in Arabidopsis thaliana (Mouse-ear cress).